A 96-amino-acid chain; its full sequence is Co-chaperonin GroES (96 aa).

The protein belongs to the GroES chaperonin family. In terms of assembly, heptamer of 7 subunits arranged in a ring. Interacts with the chaperonin GroEL.

It is found in the cytoplasm. Functionally, together with the chaperonin GroEL, plays an essential role in assisting protein folding. The GroEL-GroES system forms a nano-cage that allows encapsulation of the non-native substrate proteins and provides a physical environment optimized to promote and accelerate protein folding. GroES binds to the apical surface of the GroEL ring, thereby capping the opening of the GroEL channel. The chain is Co-chaperonin GroES from Methylibium petroleiphilum (strain ATCC BAA-1232 / LMG 22953 / PM1).